We begin with the raw amino-acid sequence, 330 residues long: ADP-L-glycero-D-manno-heptose-6-epimerase (330 aa).

NADP(+)-binding positions include 11-12, 32-33, lysine 39, lysine 54, 75-79, and asparagine 92; these read FI, DN, and EGACS. The Proton acceptor role is filled by tyrosine 139. Lysine 143 lines the NADP(+) pocket. Residue asparagine 168 participates in substrate binding. Residues valine 169 and lysine 177 each contribute to the NADP(+) site. Lysine 177 serves as the catalytic Proton acceptor. Residues arginine 179, histidine 186, 200–203, arginine 213, and tyrosine 292 each bind substrate; that span reads FGEY.

Belongs to the NAD(P)-dependent epimerase/dehydratase family. HldD subfamily. Homopentamer. Requires NADP(+) as cofactor.

The catalysed reaction is ADP-D-glycero-beta-D-manno-heptose = ADP-L-glycero-beta-D-manno-heptose. It participates in nucleotide-sugar biosynthesis; ADP-L-glycero-beta-D-manno-heptose biosynthesis; ADP-L-glycero-beta-D-manno-heptose from D-glycero-beta-D-manno-heptose 7-phosphate: step 4/4. Catalyzes the interconversion between ADP-D-glycero-beta-D-manno-heptose and ADP-L-glycero-beta-D-manno-heptose via an epimerization at carbon 6 of the heptose. The protein is ADP-L-glycero-D-manno-heptose-6-epimerase of Burkholderia multivorans (strain ATCC 17616 / 249).